Consider the following 292-residue polypeptide: 4-hydroxy-tetrahydrodipicolinate synthase (292 aa).

Threonine 45 contacts pyruvate. Tyrosine 133 acts as the Proton donor/acceptor in catalysis. The active-site Schiff-base intermediate with substrate is lysine 161. Pyruvate is bound at residue isoleucine 203.

Belongs to the DapA family. As to quaternary structure, homotetramer; dimer of dimers.

Its subcellular location is the cytoplasm. The enzyme catalyses L-aspartate 4-semialdehyde + pyruvate = (2S,4S)-4-hydroxy-2,3,4,5-tetrahydrodipicolinate + H2O + H(+). It participates in amino-acid biosynthesis; L-lysine biosynthesis via DAP pathway; (S)-tetrahydrodipicolinate from L-aspartate: step 3/4. Its function is as follows. Catalyzes the condensation of (S)-aspartate-beta-semialdehyde [(S)-ASA] and pyruvate to 4-hydroxy-tetrahydrodipicolinate (HTPA). The sequence is that of 4-hydroxy-tetrahydrodipicolinate synthase from Escherichia fergusonii (strain ATCC 35469 / DSM 13698 / CCUG 18766 / IAM 14443 / JCM 21226 / LMG 7866 / NBRC 102419 / NCTC 12128 / CDC 0568-73).